We begin with the raw amino-acid sequence, 161 residues long: MTNSKGLRRGTRYMFARDFRKHGVEHLSTYYTQYKRGDLVDIKTNGAFQKGMPFKAYHGRTGRIFNVTRGAVGIIVNKRVRGNILPKRINIRIEHIKPSKCRTDFLNRVKSNDEKRKAAKSAGQPVPALKRLPVAPRGAHTVTTQNNEPELLAPLRFEIVA.

This sequence belongs to the eukaryotic ribosomal protein eL21 family.

The sequence is that of Large ribosomal subunit protein eL21 (rpl-21) from Caenorhabditis elegans.